The sequence spans 200 residues: Oligoribonuclease (200 aa).

The 165-residue stretch at 5 to 169 (MVWIDCEMTG…ADIRESIAEL (165 aa)) folds into the Exonuclease domain. The active site involves Tyr-126.

It belongs to the oligoribonuclease family.

The protein localises to the cytoplasm. Functionally, 3'-to-5' exoribonuclease specific for small oligoribonucleotides. The protein is Oligoribonuclease of Streptomyces avermitilis (strain ATCC 31267 / DSM 46492 / JCM 5070 / NBRC 14893 / NCIMB 12804 / NRRL 8165 / MA-4680).